The primary structure comprises 224 residues: Urease accessory protein UreF (224 aa).

It belongs to the UreF family. As to quaternary structure, ureD, UreF and UreG form a complex that acts as a GTP-hydrolysis-dependent molecular chaperone, activating the urease apoprotein by helping to assemble the nickel containing metallocenter of UreC. The UreE protein probably delivers the nickel.

Its subcellular location is the cytoplasm. Required for maturation of urease via the functional incorporation of the urease nickel metallocenter. The sequence is that of Urease accessory protein UreF from Azotobacter vinelandii (strain DJ / ATCC BAA-1303).